Here is an 84-residue protein sequence, read N- to C-terminus: Putative membrane protein insertion efficiency factor (84 aa).

Belongs to the UPF0161 family.

It is found in the cell inner membrane. In terms of biological role, could be involved in insertion of integral membrane proteins into the membrane. In Shewanella pealeana (strain ATCC 700345 / ANG-SQ1), this protein is Putative membrane protein insertion efficiency factor.